A 57-amino-acid chain; its full sequence is DNA-directed RNA polymerase subunit Rpo6 (57 aa).

It belongs to the archaeal Rpo6/eukaryotic RPB6 RNA polymerase subunit family. Part of the RNA polymerase complex.

Its subcellular location is the cytoplasm. The catalysed reaction is RNA(n) + a ribonucleoside 5'-triphosphate = RNA(n+1) + diphosphate. In terms of biological role, DNA-dependent RNA polymerase (RNAP) catalyzes the transcription of DNA into RNA using the four ribonucleoside triphosphates as substrates. This chain is DNA-directed RNA polymerase subunit Rpo6, found in Thermococcus gammatolerans (strain DSM 15229 / JCM 11827 / EJ3).